A 188-amino-acid polypeptide reads, in one-letter code: Adenine phosphoribosyltransferase (188 aa).

Belongs to the purine/pyrimidine phosphoribosyltransferase family. As to quaternary structure, homodimer.

The protein resides in the cytoplasm. It carries out the reaction AMP + diphosphate = 5-phospho-alpha-D-ribose 1-diphosphate + adenine. It participates in purine metabolism; AMP biosynthesis via salvage pathway; AMP from adenine: step 1/1. Its function is as follows. Catalyzes a salvage reaction resulting in the formation of AMP, that is energically less costly than de novo synthesis. This Paraburkholderia phymatum (strain DSM 17167 / CIP 108236 / LMG 21445 / STM815) (Burkholderia phymatum) protein is Adenine phosphoribosyltransferase.